We begin with the raw amino-acid sequence, 68 residues long: Large ribosomal subunit protein bL35 (68 aa).

Basic residues-rich tracts occupy residues 1-15 (MPKM…KRFK) and 23-38 (TARK…HKSS). Residues 1 to 38 (MPKMKSHSGTKKRFKVTGSGKVTARKAGKRHLNEHKSS) are disordered.

It belongs to the bacterial ribosomal protein bL35 family.

This is Large ribosomal subunit protein bL35 from Cutibacterium acnes (strain DSM 16379 / KPA171202) (Propionibacterium acnes).